A 344-amino-acid chain; its full sequence is Transmembrane protein 268 (344 aa).

The tract at residues 1–31 (MACEPQMDPGGAAGPLPTSSPGWSPLPGGSP) is disordered. Residues 14-27 (GPLPTSSPGWSPLP) show a composition bias toward low complexity. Helical transmembrane passes span 106–126 (AFAVVFYVVVWANIYSTSQMF) and 133–153 (AGVLLVTLAATSLTLTLVVIF). Positions 244 to 266 (TANEGPENLLEETPLLPDRPGST) are disordered. Residues 247-259 (EGPENLLEETPLL) are compositionally biased toward low complexity.

In terms of assembly, interacts with ITGAM; this interaction inhibits ITGAM degradation via the endosome-lysosome pathway. Interacts with ITGB4; this interaction prevents ITGB4 degradation.

The protein resides in the cell membrane. In terms of biological role, stabilizes cell surface expression of ITGAM and participates in the adhesion and migration of phagocytes during bacterial clearance. This Bos taurus (Bovine) protein is Transmembrane protein 268 (TMEM268).